A 397-amino-acid polypeptide reads, in one-letter code: Cathepsin E-A (397 aa).

Positions 1–16 (MRQILVLLLFATLVYG) are cleaved as a signal peptide. Residues 17–52 (LIRVPLKRQKSIRKTLKEKGKLSHIWTQQGIDMVQY) constitute a propeptide, activation peptide. The region spanning 74–385 (YFGEISVGTP…DRGNNRVGLA (312 aa)) is the Peptidase A1 domain. An N-linked (GlcNAc...) asparagine glycan is attached at Asn-86. The active site involves Asp-92. A disulfide bond links Cys-105 and Cys-110. Asn-130 carries N-linked (GlcNAc...) asparagine glycosylation. A disulfide bridge links Cys-268 with Cys-272. Asp-277 is an active-site residue. Cysteines 310 and 344 form a disulfide.

This sequence belongs to the peptidase A1 family. Homodimer; disulfide-linked. Glycosylated. Contains high mannose-type oligosaccharide. Expressed predominantly in the larval foregut and the anterior and posterior adult stomach.

It localises to the endosome. It carries out the reaction Similar to cathepsin D, but slightly broader specificity.. Functionally, may have a role in immune function. Probably involved in the processing of antigenic peptides during MHC class II-mediated antigen presentation. The protein is Cathepsin E-A (ctse-a) of Xenopus laevis (African clawed frog).